The sequence spans 247 residues: NADH dehydrogenase [ubiquinone] flavoprotein 2, mitochondrial (247 aa).

The transit peptide at 1–40 (MFRSLLKRTTFLNQLNKSNGFNRNYFKQSTLTRSDALSRH) directs the protein to the mitochondrion. Positions 135, 140, 176, and 180 each coordinate [2Fe-2S] cluster. A disordered region spans residues 211-247 (NKPTKIGPQTHRKAAEGPQGKTTLLEPPVGPTCRDDL).

The protein belongs to the complex I 24 kDa subunit family. As to quaternary structure, complex I is composed of 45 different subunits. This is a component of the flavoprotein-sulfur (FP) fragment of the enzyme. [2Fe-2S] cluster is required as a cofactor.

Its subcellular location is the mitochondrion inner membrane. It catalyses the reaction a ubiquinone + NADH + 5 H(+)(in) = a ubiquinol + NAD(+) + 4 H(+)(out). Its function is as follows. Core subunit of the mitochondrial membrane respiratory chain NADH dehydrogenase (Complex I) that is believed to belong to the minimal assembly required for catalysis. Complex I functions in the transfer of electrons from NADH to the respiratory chain. The immediate electron acceptor for the enzyme is believed to be ubiquinone. This is NADH dehydrogenase [ubiquinone] flavoprotein 2, mitochondrial (ndufv2) from Dictyostelium discoideum (Social amoeba).